The primary structure comprises 182 residues: Interferon gamma 1 (182 aa).

Residues 1–21 (MIAQNMTIFFWGVCLLTSGWA) form the signal peptide. N-linked (GlcNAc...) asparagine glycosylation occurs at N93.

Belongs to the type II (or gamma) interferon family. Homodimer. As to expression, highly expressed in spleen. Also detected at lower levels in brain, gill, kidney, heart, intestine and muscle. In immune cell populations, has highest expression in peripheral blood leukocytes and splenocytes. Detected in kidney-derived monocytes, neutrophils, macrophages and leukocytes.

The protein resides in the secreted. Its function is as follows. Cytokine which binds to interferon gamma receptor 1-like (ifngr1l). Has activating effects on primary macrophages and neutrophils. Induces nitric oxide production and phagocytic responses in macrophages. Primes macrophages and neutrophils for production of reactive oxygen intermediates (ROI). Stimulates phosphorylation and nuclear localization of the JAK/STAT signal transducer stat1. Promotes increased expression of a number of genes important for macrophage activity, including the interferon regulatory factors irf1, irf2, irf8 and irf9. This Carassius auratus (Goldfish) protein is Interferon gamma 1.